A 122-amino-acid chain; its full sequence is Large ribosomal subunit protein uL14 (122 aa).

Belongs to the universal ribosomal protein uL14 family. Part of the 50S ribosomal subunit. Forms a cluster with proteins L3 and L19. In the 70S ribosome, L14 and L19 interact and together make contacts with the 16S rRNA in bridges B5 and B8.

In terms of biological role, binds to 23S rRNA. Forms part of two intersubunit bridges in the 70S ribosome. The sequence is that of Large ribosomal subunit protein uL14 from Sorangium cellulosum (strain So ce56) (Polyangium cellulosum (strain So ce56)).